The following is a 424-amino-acid chain: Tubulin-specific chaperone cofactor E-like protein (424 aa).

2 positions are modified to phosphoserine: Ser-18 and Ser-41. LRR repeat units lie at residues 73–98 (CAHV…IVSN), 99–123 (VPQL…TCAG), 124–147 (SFSG…HTIL), 150–172 (LPDL…PSVC), 173–197 (CHSL…KLGV), 199–224 (FPSL…SLAR), and 226–250 (FPNL…KLNS). An LRRCT domain is found at 262-303 (IPLLQPYTTEERRKLVVARLPSVSKLNGSVVTDGEREDSERF). One can recognise a Ubiquitin-like domain in the interval 334-424 (AEVDLRPQSS…DKIFVESKTK (91 aa)). Residues 350-375 (FNDQVEEVSIRLDQTVAELKRQLKTL) adopt a coiled-coil conformation.

It localises to the cytoplasm. It is found in the cytoskeleton. Its function is as follows. Acts as a regulator of tubulin stability. This is Tubulin-specific chaperone cofactor E-like protein (Tbcel) from Rattus norvegicus (Rat).